Consider the following 283-residue polypeptide: 5'-nucleotidase SurE 2 (283 aa).

Residues Asp19, Asp20, Ser52, and Asn110 each coordinate a divalent metal cation.

It belongs to the SurE nucleotidase family. It depends on a divalent metal cation as a cofactor.

The protein resides in the cytoplasm. It carries out the reaction a ribonucleoside 5'-phosphate + H2O = a ribonucleoside + phosphate. Its function is as follows. Nucleotidase that shows phosphatase activity on nucleoside 5'-monophosphates. This is 5'-nucleotidase SurE 2 from Chlamydia caviae (strain ATCC VR-813 / DSM 19441 / 03DC25 / GPIC) (Chlamydophila caviae).